The chain runs to 304 residues: Ribonuclease Z (304 aa).

Positions 61, 63, 65, 66, 138, 206, and 265 each coordinate Zn(2+). Asp65 acts as the Proton acceptor in catalysis.

The protein belongs to the RNase Z family. Homodimer. Zn(2+) is required as a cofactor.

It carries out the reaction Endonucleolytic cleavage of RNA, removing extra 3' nucleotides from tRNA precursor, generating 3' termini of tRNAs. A 3'-hydroxy group is left at the tRNA terminus and a 5'-phosphoryl group is left at the trailer molecule.. In terms of biological role, zinc phosphodiesterase, which displays some tRNA 3'-processing endonuclease activity. Probably involved in tRNA maturation, by removing a 3'-trailer from precursor tRNA. The chain is Ribonuclease Z from Lachnoclostridium phytofermentans (strain ATCC 700394 / DSM 18823 / ISDg) (Clostridium phytofermentans).